The chain runs to 392 residues: Succinate--CoA ligase [ADP-forming] subunit beta (392 aa).

The 239-residue stretch at 9–247 (KAILRKYGVA…VTEEDPLEVE (239 aa)) folds into the ATP-grasp domain. ATP-binding positions include K49, 56–58 (GRG), E102, L105, and E110. N202 and D216 together coordinate Mg(2+). Substrate contacts are provided by residues N267 and 324–326 (GIL).

The protein belongs to the succinate/malate CoA ligase beta subunit family. As to quaternary structure, heterotetramer of two alpha and two beta subunits. Mg(2+) serves as cofactor.

The enzyme catalyses succinate + ATP + CoA = succinyl-CoA + ADP + phosphate. It carries out the reaction GTP + succinate + CoA = succinyl-CoA + GDP + phosphate. Its pathway is carbohydrate metabolism; tricarboxylic acid cycle; succinate from succinyl-CoA (ligase route): step 1/1. In terms of biological role, succinyl-CoA synthetase functions in the citric acid cycle (TCA), coupling the hydrolysis of succinyl-CoA to the synthesis of either ATP or GTP and thus represents the only step of substrate-level phosphorylation in the TCA. The beta subunit provides nucleotide specificity of the enzyme and binds the substrate succinate, while the binding sites for coenzyme A and phosphate are found in the alpha subunit. In Koribacter versatilis (strain Ellin345), this protein is Succinate--CoA ligase [ADP-forming] subunit beta.